We begin with the raw amino-acid sequence, 354 residues long: Holliday junction branch migration complex subunit RuvB (354 aa).

The large ATPase domain (RuvB-L) stretch occupies residues 4-190 (TDKLAAERII…FGIVARLEFY (187 aa)). ATP contacts are provided by residues L29, R30, G71, K74, T75, T76, 137–139 (EDY), R180, Y190, and R227. T75 contacts Mg(2+). The small ATPAse domain (RuvB-S) stretch occupies residues 191–261 (DADQLARIVR…VADAALAMLD (71 aa)). The interval 264–354 (PVGFDLMDRK…RGMWDTPAGK (91 aa)) is head domain (RuvB-H). The DNA site is built by R300, R319, and R324.

This sequence belongs to the RuvB family. In terms of assembly, homohexamer. Forms an RuvA(8)-RuvB(12)-Holliday junction (HJ) complex. HJ DNA is sandwiched between 2 RuvA tetramers; dsDNA enters through RuvA and exits via RuvB. An RuvB hexamer assembles on each DNA strand where it exits the tetramer. Each RuvB hexamer is contacted by two RuvA subunits (via domain III) on 2 adjacent RuvB subunits; this complex drives branch migration. In the full resolvosome a probable DNA-RuvA(4)-RuvB(12)-RuvC(2) complex forms which resolves the HJ.

The protein localises to the cytoplasm. The enzyme catalyses ATP + H2O = ADP + phosphate + H(+). In terms of biological role, the RuvA-RuvB-RuvC complex processes Holliday junction (HJ) DNA during genetic recombination and DNA repair, while the RuvA-RuvB complex plays an important role in the rescue of blocked DNA replication forks via replication fork reversal (RFR). RuvA specifically binds to HJ cruciform DNA, conferring on it an open structure. The RuvB hexamer acts as an ATP-dependent pump, pulling dsDNA into and through the RuvAB complex. RuvB forms 2 homohexamers on either side of HJ DNA bound by 1 or 2 RuvA tetramers; 4 subunits per hexamer contact DNA at a time. Coordinated motions by a converter formed by DNA-disengaged RuvB subunits stimulates ATP hydrolysis and nucleotide exchange. Immobilization of the converter enables RuvB to convert the ATP-contained energy into a lever motion, pulling 2 nucleotides of DNA out of the RuvA tetramer per ATP hydrolyzed, thus driving DNA branch migration. The RuvB motors rotate together with the DNA substrate, which together with the progressing nucleotide cycle form the mechanistic basis for DNA recombination by continuous HJ branch migration. Branch migration allows RuvC to scan DNA until it finds its consensus sequence, where it cleaves and resolves cruciform DNA. The polypeptide is Holliday junction branch migration complex subunit RuvB (Burkholderia ambifaria (strain MC40-6)).